Consider the following 400-residue polypeptide: Enoyl-[acyl-carrier-protein] reductase [NADH] (400 aa).

Residues 48–53 (GASSGY), 74–75 (FE), 111–112 (DA), and 139–140 (LA) each bind NAD(+). Residue Tyr225 participates in substrate binding. Tyr235 (proton donor) is an active-site residue. Residues Lys244 and 273–275 (VVT) contribute to the NAD(+) site.

The protein belongs to the TER reductase family. As to quaternary structure, monomer.

It carries out the reaction a 2,3-saturated acyl-[ACP] + NAD(+) = a (2E)-enoyl-[ACP] + NADH + H(+). It participates in lipid metabolism; fatty acid biosynthesis. Functionally, involved in the final reduction of the elongation cycle of fatty acid synthesis (FAS II). Catalyzes the reduction of a carbon-carbon double bond in an enoyl moiety that is covalently linked to an acyl carrier protein (ACP). The protein is Enoyl-[acyl-carrier-protein] reductase [NADH] of Marinomonas sp. (strain MWYL1).